Consider the following 590-residue polypeptide: Multidrug and toxin extrusion protein 1 (590 aa).

Residues 1–59 (MDSITSYNVTQMNGDTKQEKCDDVLSTSSTQKFCGGCRKKLRSLLPVNYKTEIVELLKL) are Cytoplasmic-facing. Residues 60 to 80 (AGPVFISQLMIFLISFVSTVF) form a helical membrane-spanning segment. Over 81-88 (CGHLGKTE) the chain is Extracellular. A helical membrane pass occupies residues 89–109 (LAGVALAIAVINVTGISIGSG). Residues 110 to 137 (LASACDTLISQTFGSNNLKRVGVILQRG) lie on the Cytoplasmic side of the membrane. Residues 138 to 158 (ILILLLACFPCWALLINTEPI) traverse the membrane as a helical segment. Over 159–167 (LLAVRQSPN) the chain is Extracellular. Residues 168–188 (VASLSQLYVKIFMPALPAAFM) form a helical membrane-spanning segment. At 189–199 (YQLQGRYLQNQ) the chain is on the cytoplasmic side. Residues 200–222 (GIIWPQVITGAAGNILNALINYV) traverse the membrane as a helical segment. The Extracellular portion of the chain corresponds to 223–231 (FLHLLELGV). Residues 232 to 254 (AGSAAANTISQYSLAVFLYVYIR) traverse the membrane as a helical segment. Over 255-274 (WKNLHKATWDGWSRDCLQEW) the chain is Cytoplasmic. Residues 275-294 (GAFIRLALPSMLMLCVEWWT) form a helical membrane-spanning segment. At 295 to 313 (YEIGGFLAGLISETELGAQ) the chain is on the extracellular side. A helical membrane pass occupies residues 314–334 (SVVYELATIAYMFPLGFAVAA). At 335–351 (SVRVGNALGAGNTERAK) the chain is on the cytoplasmic side. A helical transmembrane segment spans residues 352–372 (LSAKVALVCGVLVSCVVATLI). Residues 373–395 (GCTKDVIAYIFTTEEEIVSRVSQ) lie on the Extracellular side of the membrane. Residues 396–416 (VMIMYGFFHLFDAIAGITGGI) traverse the membrane as a helical segment. The Cytoplasmic portion of the chain corresponds to 417-430 (VRGAGKQLLGALCN). The helical transmembrane segment at 431–451 (IVGYYFVGFPTGVSLMFALSM) threads the bilayer. A topological domain (extracellular) is located at residue Gly-452. The chain crosses the membrane as a helical span at residues 453–473 (IIGLWIGFFGCVFLQSLFFII). Over 474–565 (LIYKLDWKKA…TTKQLIVRRG (92 aa)) the chain is Cytoplasmic. A helical transmembrane segment spans residues 566–586 (LAVLLMVLILAGGIVLNEMLV). At 587-590 (RYLR) the chain is on the extracellular side.

This sequence belongs to the multi antimicrobial extrusion (MATE) (TC 2.A.66.1) family.

The protein localises to the cell membrane. Its function is as follows. Solute transporter for tetraethylammonium (TEA), cimetidine, metformin, guanidine, N-methylnicotinamide (NMN) and also the zwitterionic cephalosporin cephalexin. Responsible for the secretion of cationic drugs across the brush border membranes. The protein is Multidrug and toxin extrusion protein 1 (slc47a1) of Danio rerio (Zebrafish).